The chain runs to 600 residues: Elongation factor 4 (600 aa).

Residues 5 to 187 enclose the tr-type G domain; sequence SHIRNFSIVA…ALVNRLPCPE (183 aa). GTP-binding positions include 17–22 and 134–137; these read DHGKST and NKID.

The protein belongs to the TRAFAC class translation factor GTPase superfamily. Classic translation factor GTPase family. LepA subfamily.

It localises to the cell inner membrane. The enzyme catalyses GTP + H2O = GDP + phosphate + H(+). Required for accurate and efficient protein synthesis under certain stress conditions. May act as a fidelity factor of the translation reaction, by catalyzing a one-codon backward translocation of tRNAs on improperly translocated ribosomes. Back-translocation proceeds from a post-translocation (POST) complex to a pre-translocation (PRE) complex, thus giving elongation factor G a second chance to translocate the tRNAs correctly. Binds to ribosomes in a GTP-dependent manner. In Paramagnetospirillum magneticum (strain ATCC 700264 / AMB-1) (Magnetospirillum magneticum), this protein is Elongation factor 4.